A 123-amino-acid chain; its full sequence is Large ribosomal subunit protein bL12 (123 aa).

It belongs to the bacterial ribosomal protein bL12 family. As to quaternary structure, homodimer. Part of the ribosomal stalk of the 50S ribosomal subunit. Forms a multimeric L10(L12)X complex, where L10 forms an elongated spine to which 2 to 4 L12 dimers bind in a sequential fashion. Binds GTP-bound translation factors.

Functionally, forms part of the ribosomal stalk which helps the ribosome interact with GTP-bound translation factors. Is thus essential for accurate translation. This Neisseria meningitidis serogroup C (strain 053442) protein is Large ribosomal subunit protein bL12.